The chain runs to 265 residues: MKAVLLTLAVLFLTGSQARHFWQQDDPQSSWDRVKDFATVYVDAIKDSGRDYVAQFEASALGKQLNLKLLDNWDSLTSTFAKVREQLGPVTQEFWDNLEKETESLRQEMNKDLEEVKQKVQPYLDEFQKKWQEELQIYRQKVAPLGEELREGARQKVQELQDKLTPLAEEMRDRARSHVETLRQQLAPYSDDLRQRMAARFEMLKAGGGSLAEYHAKASEQLRALGEKAKPALEDLRQGLVPVLESLKVSILAAIDEASKKLNAQ.

A signal peptide spans 1–18 (MKAVLLTLAVLFLTGSQA). 2 tandem repeats follow at residues 67–88 (LKLL…EQLG) and 89–110 (PVTQ…QEMN). The tract at residues 67-265 (LKLLDNWDSL…DEASKKLNAQ (199 aa)) is 10 X approximate tandem repeats. Met-109 carries the methionine sulfoxide modification. A 3; half-length repeat occupies 111 to 121 (KDLEEVKQKVQ). 5 tandem repeats follow at residues 122-142 (PYLD…RQKV), 144-165 (PLGE…DKLT), 166-187 (PLAE…QQLA), 188-209 (PYSD…AGGG), and 210-230 (SLAE…EKAK). Residues 231 to 241 (PALEDLRQGLV) form a 9; half-length repeat. Repeat unit 10 spans residues 242 to 265 (PVLESLKVSILAAIDEASKKLNAQ).

It belongs to the apolipoprotein A1/A4/E family. As to quaternary structure, homodimer. Interacts with APOA1BP and CLU. Component of a sperm activating protein complex (SPAP), consisting of APOA1, an immunoglobulin heavy chain, an immunoglobulin light chain and albumin. Interacts with NDRG1. Interacts with SCGB3A2. Interacts with NAXE and YJEFN3. In terms of processing, glycosylated. Palmitoylated. Post-translationally, phosphorylation sites are present in the extracellular medium. In terms of tissue distribution, major protein of plasma HDL, also found in chylomicrons.

Its subcellular location is the secreted. Participates in the reverse transport of cholesterol from tissues to the liver for excretion by promoting cholesterol efflux from tissues and by acting as a cofactor for the lecithin cholesterol acyltransferase (LCAT). As part of the SPAP complex, activates spermatozoa motility. This Tursiops truncatus (Atlantic bottle-nosed dolphin) protein is Apolipoprotein A-I (APOA1).